Here is a 92-residue protein sequence, read N- to C-terminus: MEVKTFAFLQIAVIIALGLHLAPAGSNQLSGPQSSANSNDAVFCDTNCTQGTDGAWSGCRGDCFCVHVGNSTEGRCIELIGDFDYSTPGAED.

A signal peptide spans M1–A24. Intrachain disulfides connect C44-C63, C48-C65, and C59-C76. Residue N47 is glycosylated (N-linked (GlcNAc...) asparagine). The N-linked (GlcNAc...) asparagine glycan is linked to N70.

It localises to the secreted. Salivary chemokine-binding protein which binds to host chemokines CXCL1, CXCL2, CXCL3, CXCL4, CXCL5, CXCL6, CXCL10, CXCL11 and CXCL13. The sequence is that of Evasin P675 from Ixodes ricinus (Common tick).